The following is a 290-amino-acid chain: 33 kDa chaperonin (290 aa).

2 disulfide bridges follow: C235-C237 and C268-C271.

Belongs to the HSP33 family. Post-translationally, under oxidizing conditions two disulfide bonds are formed involving the reactive cysteines. Under reducing conditions zinc is bound to the reactive cysteines and the protein is inactive.

The protein localises to the cytoplasm. Functionally, redox regulated molecular chaperone. Protects both thermally unfolding and oxidatively damaged proteins from irreversible aggregation. Plays an important role in the bacterial defense system toward oxidative stress. The polypeptide is 33 kDa chaperonin (Streptococcus pneumoniae serotype 19F (strain G54)).